The following is a 270-amino-acid chain: Phospholipase A and acyltransferase 5 (270 aa).

Disordered regions lie at residues 1–54 (MGLS…SASS) and 70–122 (RRLE…NPRP). Polar residues-rich tracts occupy residues 24–54 (TQIS…SASS) and 100–116 (IPTS…NQAV). The 114-residue stretch at 127–240 (LIEIFRIGYE…LRYGVPRSQQ (114 aa)) folds into the LRAT domain. Residues His137 and His149 contribute to the active site. The active-site Acyl-thioester intermediate is the Cys224.

This sequence belongs to the H-rev107 family. Isoform 4 shows highest expression level in testis.

The protein resides in the cytoplasm. It localises to the cytosol. The catalysed reaction is a 1,2-diacyl-sn-glycero-3-phosphocholine + H2O = a 1-acyl-sn-glycero-3-phosphocholine + a fatty acid + H(+). The enzyme catalyses a 1,2-diacyl-sn-glycero-3-phosphocholine + H2O = a 2-acyl-sn-glycero-3-phosphocholine + a fatty acid + H(+). It carries out the reaction 1-hexadecanoyl-2-(5Z,8Z,11Z,14Z-eicosatetraenoyl)-sn-glycero-3-phosphocholine + 1,2-di-(9Z-octadecenoyl)-sn-glycero-3-phosphoethanolamine = N-(5Z,8Z,11Z,14Z-eicosatetraenoyl)-1,2-di-(9Z-octadecenoyl)-sn-glycero-3-phosphoethanolamine + 1-hexadecanoyl-sn-glycero-3-phosphocholine + H(+). It catalyses the reaction 1,2-di-(9Z-octadecenoyl)-sn-glycero-3-phosphoethanolamine + 1,2-dihexadecanoyl-sn-glycero-3-phosphocholine = N-hexadecanoyl-1,2-di-(9Z-octadecenoyl)-sn-glycero-3-phosphoethanolamine + 1-hexadecanoyl-sn-glycero-3-phosphocholine + H(+). The catalysed reaction is 1,2-di-(9Z-octadecenoyl)-sn-glycero-3-phosphoethanolamine + 1,2-dihexadecanoyl-sn-glycero-3-phosphocholine = N-hexadecanoyl-1,2-di-(9Z-octadecenoyl)-sn-glycero-3-phosphoethanolamine + 2-hexadecanoyl-sn-glycero-3-phosphocholine + H(+). The enzyme catalyses a 1,2-diacyl-sn-glycero-3-phosphoethanolamine + a 1,2-diacyl-sn-glycero-3-phosphocholine = an N-acyl-1,2-diacyl-sn-glycero-3-phosphoethanolamine + a 1-acyl-sn-glycero-3-phosphocholine + H(+). It carries out the reaction a 1,2-diacyl-sn-glycero-3-phosphoethanolamine + a 1,2-diacyl-sn-glycero-3-phosphocholine = an N-acyl-1,2-diacyl-sn-glycero-3-phosphoethanolamine + a 2-acyl-sn-glycero-3-phosphocholine + H(+). It catalyses the reaction 1-hexadecanoyl-2-(9Z-octadecenoyl)-sn-glycero-3-phosphocholine + 1,2-di-(9Z-octadecenoyl)-sn-glycero-3-phosphoethanolamine = N,1,2-tri-(9Z-octadecenoyl)-sn-glycero-3-phosphoethanolamine + 1-hexadecanoyl-sn-glycero-3-phosphocholine + H(+). Functionally, exhibits both phospholipase A1/2 and acyltransferase activities. Shows phospholipase A1 (PLA1) and A2 (PLA2) activity, catalyzing the calcium-independent release of fatty acids from the sn-1 or sn-2 position of glycerophospholipids. Shows N-acyltransferase activity, catalyzing the calcium-independent transfer of a fatty acyl group at the sn-1 position of phosphatidylcholine (PC) and other glycerophospholipids to the primary amine of phosphatidylethanolamine (PE), forming N-acylphosphatidylethanolamine (NAPE), which serves as precursor for N-acylethanolamines (NAEs). The protein is Phospholipase A and acyltransferase 5 of Mus musculus (Mouse).